The chain runs to 493 residues: Cysteine--tRNA ligase (493 aa).

Residue Cys31 participates in Zn(2+) binding. The 'HIGH' region signature appears at Pro33–His43. 3 residues coordinate Zn(2+): Cys226, His251, and Glu255. Positions Lys283–Ser287 match the 'KMSKS' region motif. Lys286 lines the ATP pocket.

The protein belongs to the class-I aminoacyl-tRNA synthetase family. Monomer. The cofactor is Zn(2+).

Its subcellular location is the cytoplasm. The catalysed reaction is tRNA(Cys) + L-cysteine + ATP = L-cysteinyl-tRNA(Cys) + AMP + diphosphate. This Bacteroides thetaiotaomicron (strain ATCC 29148 / DSM 2079 / JCM 5827 / CCUG 10774 / NCTC 10582 / VPI-5482 / E50) protein is Cysteine--tRNA ligase.